Consider the following 434-residue polypeptide: ATP-sensitive inward rectifier potassium channel 14 (434 aa).

Topologically, residues 1 to 81 (MGLARALRRL…LSDLFTTCVD (81 aa)) are cytoplasmic. S-nitrosocysteine is present on C79. The helical transmembrane segment at 82-108 (VRWRWMCLLFSCSFLASWLLFGLTFWL) threads the bilayer. The Extracellular portion of the chain corresponds to 109–131 (IASLHGDLAAPPPPAPCFSQVAS). The segment at residues 132–148 (FLAAFLFALETQTSIGY) is an intramembrane region (helical; Pore-forming). The short motif at 145–150 (SIGYGV) is the Selectivity filter element. Residues 149–157 (GVRSVTEEC) lie on the Extracellular side of the membrane. Residues 158 to 185 (PAAVAAVVLQCIAGCVLDAFVVGAVMAK) traverse the membrane as a helical segment. Residues 186–434 (MAKPKKRNET…TPTLALTLPP (249 aa)) are Cytoplasmic-facing. The disordered stretch occupies residues 398–434 (QEEDEEEDTKEGTSAETPERAASPQALTPTLALTLPP). A compositionally biased stretch (basic and acidic residues) spans 407-416 (KEGTSAETPE). The span at 418–434 (AASPQALTPTLALTLPP) shows a compositional bias: low complexity.

This sequence belongs to the inward rectifier-type potassium channel (TC 1.A.2.1) family. KCNJ14 subfamily.

Its subcellular location is the membrane. The enzyme catalyses K(+)(in) = K(+)(out). Channel activity is regulated by variations of cytosolic pH; channels are activated by alkaline and inhibited by acidic pH values. Inhibited by Ba(2+) and Cs(+) in a voltage-dependent manner; sensitivity to those inhibitors is lower than in other Kir channels. Inward rectifier potassium channels are characterized by a greater tendency to allow potassium to flow into the cell rather than out of it. Their voltage dependence is regulated by the concentration of extracellular potassium; as external potassium is raised, the voltage range of the channel opening shifts to more positive voltages. This chain is ATP-sensitive inward rectifier potassium channel 14 (Kcnj14), found in Mus musculus (Mouse).